A 56-amino-acid chain; its full sequence is Large ribosomal subunit protein bL33 (56 aa).

This sequence belongs to the bacterial ribosomal protein bL33 family.

The protein is Large ribosomal subunit protein bL33 of Glaesserella parasuis serovar 5 (strain SH0165) (Haemophilus parasuis).